A 156-amino-acid polypeptide reads, in one-letter code: Rhombotin-1 (156 aa).

LIM zinc-binding domains follow at residues 24–83 (CAGC…RLFG) and 88–147 (CAAC…EGQL).

As to expression, expressed mainly in the central nervous. Low level of expression in other tissues including thymus.

The protein resides in the nucleus. Its function is as follows. May be involved in gene regulation within neural lineage cells potentially by direct DNA binding or by binding to other transcription factors. This is Rhombotin-1 (LMO1) from Homo sapiens (Human).